Reading from the N-terminus, the 84-residue chain is Dolichol phosphate-mannose biosynthesis regulatory protein (84 aa).

2 consecutive transmembrane segments (helical) span residues 11-31 (LGLV…VILL) and 49-69 (YAVA…GLFI).

It belongs to the DPM2 family. As to quaternary structure, component of the dolichol-phosphate mannose (DPM) synthase complex composed of DPM1, DPM2 and DPM3; in the complex interacts directly with DPM3. Component of the glycosylphosphatidylinositol-N-acetylglucosaminyltransferase (GPI-GnT) complex composed at least by PIGA, PIGC, PIGH, PIGP, PIGQ, PIGY and DPM2. Interacts with PIGA, PIGC and PIGQ.

It localises to the endoplasmic reticulum membrane. Its pathway is protein modification; protein glycosylation. Its function is as follows. Regulates the biosynthesis of dolichol phosphate-mannose. Regulatory subunit of the dolichol-phosphate mannose (DPM) synthase complex; essential for the ER localization and stable expression of DPM1. Part of the glycosylphosphatidylinositol-N-acetylglucosaminyltransferase (GPI-GnT) complex that catalyzes the transfer of N-acetylglucosamine from UDP-N-acetylglucosamine to phosphatidylinositol and participates in the first step of GPI biosynthesis. May act by regulating the GPI-GNT complex. The polypeptide is Dolichol phosphate-mannose biosynthesis regulatory protein (Homo sapiens (Human)).